A 479-amino-acid polypeptide reads, in one-letter code: Ribulose bisphosphate carboxylase large chain (479 aa).

Residues Met-1–Ser-2 constitute a propeptide that is removed on maturation. Substrate-binding residues include Asn-123 and Thr-173. The Proton acceptor role is filled by Lys-175. Position 177 (Lys-177) interacts with substrate. Mg(2+) is bound by residues Lys-201, Asp-203, and Glu-204. An N6-carboxylysine modification is found at Lys-201. Ser-208 carries the phosphoserine modification. His-294 serves as the catalytic Proton acceptor. Substrate-binding residues include Arg-295 and His-327. Phosphothreonine is present on Thr-330. Ser-379 contributes to the substrate binding site.

This sequence belongs to the RuBisCO large chain family. Type I subfamily. Heterohexadecamer of 8 large chains and 8 small chains; disulfide-linked. The disulfide link is formed within the large subunit homodimers. Mg(2+) serves as cofactor. The disulfide bond which can form in the large chain dimeric partners within the hexadecamer appears to be associated with oxidative stress and protein turnover.

It localises to the plastid. The protein resides in the chloroplast. The catalysed reaction is 2 (2R)-3-phosphoglycerate + 2 H(+) = D-ribulose 1,5-bisphosphate + CO2 + H2O. It carries out the reaction D-ribulose 1,5-bisphosphate + O2 = 2-phosphoglycolate + (2R)-3-phosphoglycerate + 2 H(+). Its function is as follows. RuBisCO catalyzes two reactions: the carboxylation of D-ribulose 1,5-bisphosphate, the primary event in carbon dioxide fixation, as well as the oxidative fragmentation of the pentose substrate in the photorespiration process. Both reactions occur simultaneously and in competition at the same active site. The polypeptide is Ribulose bisphosphate carboxylase large chain (Lobularia maritima (Sweet alyssum)).